We begin with the raw amino-acid sequence, 607 residues long: Arginine--tRNA ligase (607 aa).

The 'HIGH' region motif lies at 147–157 (PNIAKEMHVGH).

The protein belongs to the class-I aminoacyl-tRNA synthetase family. In terms of assembly, monomer.

It localises to the cytoplasm. The enzyme catalyses tRNA(Arg) + L-arginine + ATP = L-arginyl-tRNA(Arg) + AMP + diphosphate. The polypeptide is Arginine--tRNA ligase (Prochlorococcus marinus (strain NATL2A)).